Reading from the N-terminus, the 226-residue chain is tRNA (guanine-N(7)-)-methyltransferase (226 aa).

Residues Met-1–Val-22 are disordered. S-adenosyl-L-methionine contacts are provided by Glu-59, Glu-84, Asp-111, and Asp-133. Asp-133 is a catalytic residue. Lys-137 provides a ligand contact to substrate. Residues Arg-139–Arg-144 are interaction with RNA. Residues Asp-169 and Thr-206 to Glu-209 each bind substrate.

Belongs to the class I-like SAM-binding methyltransferase superfamily. TrmB family.

It catalyses the reaction guanosine(46) in tRNA + S-adenosyl-L-methionine = N(7)-methylguanosine(46) in tRNA + S-adenosyl-L-homocysteine. Its pathway is tRNA modification; N(7)-methylguanine-tRNA biosynthesis. Functionally, catalyzes the formation of N(7)-methylguanine at position 46 (m7G46) in tRNA. The protein is tRNA (guanine-N(7)-)-methyltransferase of Caulobacter vibrioides (strain ATCC 19089 / CIP 103742 / CB 15) (Caulobacter crescentus).